A 324-amino-acid polypeptide reads, in one-letter code: Putative glycosyltransferase R655 (324 aa).

It belongs to the glycosyltransferase 25 family.

This Acanthamoeba polyphaga (Amoeba) protein is Putative glycosyltransferase R655.